The sequence spans 378 residues: Leukocyte elastase inhibitor (378 aa).

Met1 is modified (N-acetylmethionine). Lys137 carries the post-translational modification N6-acetyllysine. Position 299 is a phosphoserine (Ser299). The tract at residues 350–378 (DFIADHPFIFFIRHNPSSNILFLGRLSSP) is CARD-binding motif (CBM).

Belongs to the serpin family. Ov-serpin subfamily. As to quaternary structure, monomer. Interacts (via C-terminus) with CASP1; CASP4 (via CARD domain) and CASP5; these interactions regulate the activity of inflammatory caspases. Interacts with PRTN3. Interacts with GZMH.

It localises to the secreted. Its subcellular location is the cytoplasm. It is found in the cytolytic granule. The protein resides in the early endosome. In terms of biological role, neutrophil serine protease inhibitor that plays an essential role in the regulation of the innate immune response, inflammation and cellular homeostasis. Acts primarily to protect the cell from proteases released in the cytoplasm during stress or infection. These proteases are important in killing microbes but when released from granules, these potent enzymes also destroy host proteins and contribute to mortality. Regulates the activity of the neutrophil proteases elastase, cathepsin G, proteinase-3, chymase, chymotrypsin, and kallikrein-3. Also acts as a potent intracellular inhibitor of GZMH by directly blocking its proteolytic activity. During inflammation, limits the activity of inflammatory caspases CASP1, CASP4 and CASP5 by suppressing their caspase-recruitment domain (CARD) oligomerization and enzymatic activation. When secreted, promotes the proliferation of beta-cells via its protease inhibitory function. Its function is as follows. May be cleaved leading to a loss of its anti-protease activity and to the appearance of an endonuclease activity. However no catalytic site was identified. In Sus scrofa (Pig), this protein is Leukocyte elastase inhibitor (SERPINB1).